Here is a 405-residue protein sequence, read N- to C-terminus: Probable tRNA sulfurtransferase (405 aa).

One can recognise a THUMP domain in the interval 60–165 (TEVDKRLKKV…QDAVYISNQL (106 aa)). ATP-binding positions include 183-184 (ML), 208-209 (HF), arginine 265, glycine 287, and glutamine 296.

It belongs to the ThiI family.

It is found in the cytoplasm. It catalyses the reaction [ThiI sulfur-carrier protein]-S-sulfanyl-L-cysteine + a uridine in tRNA + 2 reduced [2Fe-2S]-[ferredoxin] + ATP + H(+) = [ThiI sulfur-carrier protein]-L-cysteine + a 4-thiouridine in tRNA + 2 oxidized [2Fe-2S]-[ferredoxin] + AMP + diphosphate. It carries out the reaction [ThiS sulfur-carrier protein]-C-terminal Gly-Gly-AMP + S-sulfanyl-L-cysteinyl-[cysteine desulfurase] + AH2 = [ThiS sulfur-carrier protein]-C-terminal-Gly-aminoethanethioate + L-cysteinyl-[cysteine desulfurase] + A + AMP + 2 H(+). It functions in the pathway cofactor biosynthesis; thiamine diphosphate biosynthesis. Its function is as follows. Catalyzes the ATP-dependent transfer of a sulfur to tRNA to produce 4-thiouridine in position 8 of tRNAs, which functions as a near-UV photosensor. Also catalyzes the transfer of sulfur to the sulfur carrier protein ThiS, forming ThiS-thiocarboxylate. This is a step in the synthesis of thiazole, in the thiamine biosynthesis pathway. The sulfur is donated as persulfide by IscS. The polypeptide is Probable tRNA sulfurtransferase (Lactobacillus acidophilus (strain ATCC 700396 / NCK56 / N2 / NCFM)).